The following is a 161-amino-acid chain: Transcription elongation factor GreA (161 aa).

A coiled-coil region spans residues L8–R28.

Belongs to the GreA/GreB family.

Functionally, necessary for efficient RNA polymerase transcription elongation past template-encoded arresting sites. The arresting sites in DNA have the property of trapping a certain fraction of elongating RNA polymerases that pass through, resulting in locked ternary complexes. Cleavage of the nascent transcript by cleavage factors such as GreA or GreB allows the resumption of elongation from the new 3'terminus. GreA releases sequences of 2 to 3 nucleotides. This is Transcription elongation factor GreA from Mycoplasma genitalium (strain ATCC 33530 / DSM 19775 / NCTC 10195 / G37) (Mycoplasmoides genitalium).